A 352-amino-acid polypeptide reads, in one-letter code: Uroporphyrinogen decarboxylase (352 aa).

Substrate contacts are provided by residues 27 to 31, Asp77, Tyr154, Thr209, and His325; that span reads RQAGR.

Belongs to the uroporphyrinogen decarboxylase family. In terms of assembly, homodimer.

Its subcellular location is the cytoplasm. The catalysed reaction is uroporphyrinogen III + 4 H(+) = coproporphyrinogen III + 4 CO2. It functions in the pathway porphyrin-containing compound metabolism; protoporphyrin-IX biosynthesis; coproporphyrinogen-III from 5-aminolevulinate: step 4/4. Functionally, catalyzes the decarboxylation of four acetate groups of uroporphyrinogen-III to yield coproporphyrinogen-III. This chain is Uroporphyrinogen decarboxylase, found in Legionella pneumophila (strain Paris).